The primary structure comprises 419 residues: GTPase Obg (419 aa).

The Obg domain maps to 1 to 156 (MFIDKVNTYL…AEVNLELRLI (156 aa)). Residues 157 to 325 (ADVGLLGLPN…LLKEMLRMLE (169 aa)) enclose the OBG-type G domain. Residues 163–170 (GLPNAGKS), 188–192 (FTTLA), 209–212 (DIPG), 279–282 (NKID), and 306–308 (SAA) each bind GTP. Mg(2+) is bound by residues serine 170 and threonine 190. The 78-residue stretch at 342 to 419 (KKYIYEPEFK…IGDFEFTFEK (78 aa)) folds into the OCT domain.

This sequence belongs to the TRAFAC class OBG-HflX-like GTPase superfamily. OBG GTPase family. As to quaternary structure, monomer. The cofactor is Mg(2+).

Its subcellular location is the cytoplasm. An essential GTPase which binds GTP, GDP and possibly (p)ppGpp with moderate affinity, with high nucleotide exchange rates and a fairly low GTP hydrolysis rate. Plays a role in control of the cell cycle, stress response, ribosome biogenesis and in those bacteria that undergo differentiation, in morphogenesis control. This is GTPase Obg from Endomicrobium trichonymphae.